The following is a 61-amino-acid chain: Small ribosomal subunit protein uS14 (61 aa).

4 residues coordinate Zn(2+): cysteine 24, cysteine 27, cysteine 40, and cysteine 43.

Belongs to the universal ribosomal protein uS14 family. Zinc-binding uS14 subfamily. As to quaternary structure, part of the 30S ribosomal subunit. Contacts proteins S3 and S10. Zn(2+) serves as cofactor.

Functionally, binds 16S rRNA, required for the assembly of 30S particles and may also be responsible for determining the conformation of the 16S rRNA at the A site. This is Small ribosomal subunit protein uS14 from Thermus thermophilus (strain ATCC BAA-163 / DSM 7039 / HB27).